The primary structure comprises 200 residues: Cysteine dioxygenase type 1 (200 aa).

3 residues coordinate Fe cation: His-86, His-88, and His-140. Residues 93 to 157 (CFLKMLQGNL…TEPAVSLHLY (65 aa)) constitute a cross-link (3'-(S-cysteinyl)-tyrosine (Cys-Tyr)).

This sequence belongs to the cysteine dioxygenase family. In terms of assembly, monomer. Fe(2+) is required as a cofactor. Ni(2+) serves as cofactor. Requires Zn(2+) as cofactor. The thioether cross-link between Cys-93 and Tyr-157 plays a structural role through stabilizing the Fe(2+) ion, and prevents the production of highly damaging free hydroxyl radicals by holding the oxygen radical via hydroxyl hydrogen. In terms of tissue distribution, highly expressed in liver and placenta. Low expression in heart, brain and pancreas. Also detected in hepatoblastoma Hep-G2 cells.

The catalysed reaction is L-cysteine + O2 = 3-sulfino-L-alanine + H(+). It participates in organosulfur biosynthesis; taurine biosynthesis; hypotaurine from L-cysteine: step 1/2. Functionally, catalyzes the oxidation of cysteine to cysteine sulfinic acid with addition of molecular dioxygen. The chain is Cysteine dioxygenase type 1 (CDO1) from Homo sapiens (Human).